Here is a 98-residue protein sequence, read N- to C-terminus: MPTETERCIESLIAVFQKYSGKDGNNTQLSKTEFLSFMNTELAAFTKNQKDPGVLDRMMKKLDLNCDGQLDFQEFLNLIGGLAIACHDSFIQTSQKRI.

Threonine 5 carries the post-translational modification Phosphothreonine. EF-hand domains follow at residues 8-44 (CIES…ELAA) and 50-85 (KDPG…LAIA). Position 22 is an N6-acetyllysine (lysine 22). Ca(2+) contacts are provided by asparagine 26, glutamine 28, glutamate 33, aspartate 63, asparagine 65, aspartate 67, glutamine 69, and glutamate 74.

The protein belongs to the S-100 family. As to quaternary structure, homodimer; disulfide-linked. In terms of processing, phosphorylation at Thr-5 significantly suppresses homodimerization and promotes association with NCL/nucleolin which induces nuclear translocation.

The protein resides in the cytoplasm. It is found in the nucleus. In terms of biological role, facilitates the differentiation and the cornification of keratinocytes. This Mus musculus (Mouse) protein is Protein S100-A11 (S100a11).